The chain runs to 280 residues: Ribosomal RNA small subunit methyltransferase A (280 aa).

The S-adenosyl-L-methionine site is built by Asn-11, Leu-13, Gly-37, Glu-57, Asp-85, and Asn-106.

Belongs to the class I-like SAM-binding methyltransferase superfamily. rRNA adenine N(6)-methyltransferase family. RsmA subfamily.

The protein resides in the cytoplasm. It catalyses the reaction adenosine(1518)/adenosine(1519) in 16S rRNA + 4 S-adenosyl-L-methionine = N(6)-dimethyladenosine(1518)/N(6)-dimethyladenosine(1519) in 16S rRNA + 4 S-adenosyl-L-homocysteine + 4 H(+). Its function is as follows. Specifically dimethylates two adjacent adenosines (A1518 and A1519) in the loop of a conserved hairpin near the 3'-end of 16S rRNA in the 30S particle. May play a critical role in biogenesis of 30S subunits. The protein is Ribosomal RNA small subunit methyltransferase A of Campylobacter concisus (strain 13826).